Here is a 159-residue protein sequence, read N- to C-terminus: Phosphopantetheine adenylyltransferase (159 aa).

Ser-9 contacts substrate. Residues 9–10 (SF) and His-17 contribute to the ATP site. Substrate is bound by residues Lys-41, Ile-75, and Lys-89. Residues 90–92 (GLR), Glu-100, and 124–130 (LEHISSS) each bind ATP.

Belongs to the bacterial CoaD family. Homohexamer. It depends on Mg(2+) as a cofactor.

The protein localises to the cytoplasm. The catalysed reaction is (R)-4'-phosphopantetheine + ATP + H(+) = 3'-dephospho-CoA + diphosphate. Its pathway is cofactor biosynthesis; coenzyme A biosynthesis; CoA from (R)-pantothenate: step 4/5. Functionally, reversibly transfers an adenylyl group from ATP to 4'-phosphopantetheine, yielding dephospho-CoA (dPCoA) and pyrophosphate. The polypeptide is Phosphopantetheine adenylyltransferase (Bifidobacterium animalis subsp. lactis (strain AD011)).